We begin with the raw amino-acid sequence, 194 residues long: Calcium-binding protein J (194 aa).

EF-hand domains follow at residues 62 to 97 (WDKDLLIQLFKLFDTDCNGILDFKEFVTSLYIMTKA) and 98 to 133 (PVVEKLSLLFDLFDKDQSGHLEVDEVEKLIGVAVAC). Residues Asp75, Asp77, Asn79, Glu86, Asp111, Asp113, Ser115, His117, and Glu122 each contribute to the Ca(2+) site.

This sequence belongs to the recoverin family.

The protein is Calcium-binding protein J (cbpJ) of Dictyostelium discoideum (Social amoeba).